The primary structure comprises 282 residues: 2-dehydro-3-deoxyphosphooctonate aldolase (282 aa).

This sequence belongs to the KdsA family.

It is found in the cytoplasm. The enzyme catalyses D-arabinose 5-phosphate + phosphoenolpyruvate + H2O = 3-deoxy-alpha-D-manno-2-octulosonate-8-phosphate + phosphate. Its pathway is carbohydrate biosynthesis; 3-deoxy-D-manno-octulosonate biosynthesis; 3-deoxy-D-manno-octulosonate from D-ribulose 5-phosphate: step 2/3. It functions in the pathway bacterial outer membrane biogenesis; lipopolysaccharide biosynthesis. The polypeptide is 2-dehydro-3-deoxyphosphooctonate aldolase (Shewanella baltica (strain OS223)).